Reading from the N-terminus, the 596-residue chain is Uptake hydrogenase large subunit (596 aa).

Ni(2+) contacts are provided by C75, C78, C575, and C578.

It belongs to the [NiFe]/[NiFeSe] hydrogenase large subunit family. As to quaternary structure, heterodimer of a large and a small subunit. Ni(2+) is required as a cofactor.

The protein localises to the cell membrane. The enzyme catalyses H2 + A = AH2. Its function is as follows. This enzyme recycles the H(2) produced by nitrogenase to increase the production of ATP and to protect nitrogenase against inhibition or damage by O(2) under carbon- or phosphate-limited conditions. The protein is Uptake hydrogenase large subunit (hupB) of Rhizobium leguminosarum bv. viciae.